The following is a 599-amino-acid chain: Proline--tRNA ligase (599 aa).

The protein belongs to the class-II aminoacyl-tRNA synthetase family. ProS type 1 subfamily. In terms of assembly, homodimer.

The protein resides in the cytoplasm. The catalysed reaction is tRNA(Pro) + L-proline + ATP = L-prolyl-tRNA(Pro) + AMP + diphosphate. In terms of biological role, catalyzes the attachment of proline to tRNA(Pro) in a two-step reaction: proline is first activated by ATP to form Pro-AMP and then transferred to the acceptor end of tRNA(Pro). As ProRS can inadvertently accommodate and process non-cognate amino acids such as alanine and cysteine, to avoid such errors it has two additional distinct editing activities against alanine. One activity is designated as 'pretransfer' editing and involves the tRNA(Pro)-independent hydrolysis of activated Ala-AMP. The other activity is designated 'posttransfer' editing and involves deacylation of mischarged Ala-tRNA(Pro). The misacylated Cys-tRNA(Pro) is not edited by ProRS. This is Proline--tRNA ligase from Prochlorococcus marinus (strain MIT 9303).